An 89-amino-acid chain; its full sequence is MVKNSFNSVIPQEENKGSVEFQVFNFTNKIRRLTSHLELHRKDYLSQRGLRGILGKRQRLLAYLSKKNRVRYQELIGQLDIREPKTREF.

This sequence belongs to the universal ribosomal protein uS15 family. As to quaternary structure, part of the 30S ribosomal subunit.

Its subcellular location is the plastid. It is found in the chloroplast. The chain is Small ribosomal subunit protein uS15c (rps15) from Chloranthus spicatus (Chulantree).